Here is a 337-residue protein sequence, read N- to C-terminus: Retrovirus-related Pol polyprotein from type-1 retrotransposable element R1 (337 aa).

In terms of domain architecture, Reverse transcriptase spans G1–M118. Residues K253 to D337 are nucleic acid-binding endonuclease.

The catalysed reaction is DNA(n) + a 2'-deoxyribonucleoside 5'-triphosphate = DNA(n+1) + diphosphate. The polypeptide is Retrovirus-related Pol polyprotein from type-1 retrotransposable element R1 (Nasonia vitripennis (Parasitic wasp)).